The primary structure comprises 45 residues: Temporin-SHf (45 aa).

Positions 1-10 (FLGTINLSLC) are cleaved as a signal peptide. Positions 11–35 (EEERDADEEERRDEPDESNVEVKKR) are excised as a propeptide. Phenylalanine amide is present on Phe43.

Belongs to the frog skin active peptide (FSAP) family. Temporin subfamily.

It localises to the secreted. The protein localises to the target cell membrane. In terms of biological role, non-amphipathic alpha-helical antimicrobial peptide with potent activity against some Gram-positive bacteria (including methicillin-resistant Staphylococcus aureus (MRSA)), weak activity against Gram-negative bacteria and no activity against fungi. Permeabilizates membranes through a detergent-like effect probably via the carpet mechanism. More precisely, it strongly and selectively perturbs anionic bilayers membranes by interacting with the polar headgroups and the glycerol backbone region of the phospholipids, hence disrupting the acyl chain packing of the bilayer. Is not active against Leishmania (promastigote and axenic amastigote forms). Does not show hemolytic activity. Does not show toxicity for human THP-1-derived macrophages. The polypeptide is Temporin-SHf (Pelophylax saharicus (Sahara frog)).